Reading from the N-terminus, the 343-residue chain is GTPase Obg (343 aa).

The region spanning 2-160 (EKFVDRVKIF…RWIILELKLI (159 aa)) is the Obg domain. The OBG-type G domain maps to 161 to 332 (ADVGLVGFPN…LKEGLWKKYE (172 aa)). Residues 167-174 (GFPNAGKS), 192-196 (FTTLS), 214-217 (DIPG), 284-287 (NKID), and 313-315 (SAL) each bind GTP. The Mg(2+) site is built by Ser174 and Thr194.

Belongs to the TRAFAC class OBG-HflX-like GTPase superfamily. OBG GTPase family. In terms of assembly, monomer. It depends on Mg(2+) as a cofactor.

Its subcellular location is the cytoplasm. In terms of biological role, an essential GTPase which binds GTP, GDP and possibly (p)ppGpp with moderate affinity, with high nucleotide exchange rates and a fairly low GTP hydrolysis rate. Plays a role in control of the cell cycle, stress response, ribosome biogenesis and in those bacteria that undergo differentiation, in morphogenesis control. The polypeptide is GTPase Obg (Aquifex aeolicus (strain VF5)).